Here is a 1888-residue protein sequence, read N- to C-terminus: Eukaryotic translation initiation factor 4G (1888 aa).

Disordered regions lie at residues 1–259, 391–420, 449–662, 726–761, 838–903, 961–1042, 1083–1138, 1331–1356, 1462–1605, and 1639–1691; these read MSFN…PTTP, FDNK…TQPL, PLPS…SLQH, VAHS…KNSE, ADVS…DGEV, AYKR…SGDR, TNVS…DPRL, GERE…EREE, KWQQ…PGDL, and RFAG…PSLP. 2 stretches are compositionally biased toward polar residues: residues 13 to 36 and 75 to 84; these read GYTQ…SGTH and VNSTDSSNAP. Basic and acidic residues predominate over residues 171–183; that stretch reads DEQKRDQARHESF. Over residues 185–195 the composition is skewed to pro residues; the sequence is PVPPMPIPLAP. Composition is skewed to polar residues over residues 211–231, 244–259, 393–405, and 458–475; these read NVGQ…NTGD, ASPN…PTTP, NKQS…TGTS, and NSQP…SQNV. Over residues 497-506 the composition is skewed to basic and acidic residues; that stretch reads PNREHTRDTH. The span at 586–596 shows a compositional bias: polar residues; it reads IKSSPVISKQF. Positions 603–630 are enriched in low complexity; the sequence is VSLESQDSSSVQSSLTASSEESELAVAH. Residues 631-645 are compositionally biased toward basic and acidic residues; it reads SEVRRENLLGSDLHK. Positions 840 to 850 are enriched in low complexity; sequence VSASVSSSSTV. Over residues 869-885 the composition is skewed to polar residues; that stretch reads NMSSNEVLKNVVKSDQP. Residues 963–983 show a composition bias toward basic and acidic residues; the sequence is KRPEEKKETVAHSESIERTES. An EIF4E-binding region spans residues 1048 to 1093; the sequence is KKYSRDFLLKFAEQFLDLPHNFEVTSDIESLMSTHTNVSHHHDRDP. Over residues 1109 to 1124 the composition is skewed to basic and acidic residues; it reads RLDRRGSNLVDDDRWS. The region spanning 1239 to 1462 is the MIF4G domain; it reads QRQLKAILNK…KDAIDLRKNK (224 aa). Basic and acidic residues-rich tracts occupy residues 1467 to 1484 and 1661 to 1674; these read RKVE…DAAQ and KDLR…DRSR. The MI domain occupies 1700–1824; sequence RLQQLSLTAI…SLREVADLIC (125 aa).

Belongs to the eukaryotic initiation factor 4G family. In terms of assembly, EIF4F is a multi-subunit complex, the composition of which varies with external and internal environmental conditions. It is composed of at least EIF4A, EIF4E and EIF4G. Interacts directly with eIF4E. In higher plants two isoforms of EIF4F have been identified, named isoform EIF4F and isoform EIF(iso)4F. Isoform EIF4F has subunits p220 and p26, whereas isoform EIF(iso)4F has subunits p82 and p28.

Its function is as follows. Component of the protein complex eIF4F, which is involved in the recognition of the mRNA cap, ATP-dependent unwinding of 5'-terminal secondary structure and recruitment of mRNA to the ribosome. This chain is Eukaryotic translation initiation factor 4G, found in Cucumis melo (Muskmelon).